The sequence spans 171 residues: Replication restart protein PriC (171 aa).

The protein belongs to the PriC family. As to quaternary structure, monomer. Component of the replication restart primosome, which is composed of PriA, PriB, PriC, DnaBe and DnaT; DnaG primase associates transiently with this complex. Interacts with the C-terminus of SSB. SSB interaction is required to load the main replicative helicase onto substrate replication forks. Interacts with helicase DnaB alone and in the DnaB-DnaC complex, probably 1:1 binding with DnaB.

In terms of biological role, involved in the restart of stalled replication forks, which reloads the DnaB replicative helicase on sites other than the origin of replication. In vitro can load (E.coli) DnaB replicative helicase from a DnaB-DnaC complex on a single-stranded DNA (ssDNA)-binding protein (SSB)-coated stalled replication fork with no leading- or lagging-strand in the absence of other primosome proteins (PriA, PriB or DnaT). Binds SSB (tested with E.coli protein) and ssDNA. Complements priC in an E.coli priB-priC double deletion. The polypeptide is Replication restart protein PriC (Cronobacter sakazakii (strain ATCC BAA-894) (Enterobacter sakazakii)).